The primary structure comprises 377 residues: Mannan endo-1,4-beta-mannosidase A (377 aa).

The N-terminal stretch at 1 to 18 (MKLSHMLLSLASLGVATA) is a signal peptide. Trp-84 lines the substrate pocket. Asn-105 is a glycosylation site (N-linked (GlcNAc...) asparagine). Asn-197 contributes to the substrate binding site. Catalysis depends on Glu-198, which acts as the Proton donor. Asn-255 carries an N-linked (GlcNAc...) asparagine glycan. Tyr-273 contributes to the substrate binding site. Glu-306 (nucleophile) is an active-site residue. An N-linked (GlcNAc...) asparagine glycan is attached at Asn-326. Trp-336 serves as a coordination point for substrate. A glycan (N-linked (GlcNAc...) asparagine) is linked at Asn-357.

The protein belongs to the glycosyl hydrolase 5 (cellulase A) family.

The protein resides in the secreted. The catalysed reaction is Random hydrolysis of (1-&gt;4)-beta-D-mannosidic linkages in mannans, galactomannans and glucomannans.. Its function is as follows. Endo-1,4-mannanase, a crucial enzyme for depolymerization of seed galactomannans and wood galactoglucomannans. This is Mannan endo-1,4-beta-mannosidase A (manA) from Aspergillus aculeatus.